Consider the following 283-residue polypeptide: Putative aquaporin NIP4-1 (283 aa).

The residue at position 1 (Met-1) is an N-acetylmethionine. 2 helical membrane passes run 45-65 (LIAE…VVVV) and 70-90 (GGTI…MVMI). The NPA 1 signature appears at 102 to 104 (NPA). 3 helical membrane passes run 122 to 142 (LYIG…RLMF), 161 to 181 (ALVA…GVAT), and 189 to 209 (LAGI…GPIS). Residues 214–216 (NPA) carry the NPA 2 motif. A helical transmembrane segment spans residues 231-251 (IWVYIVGPVLGVISGGFVYNL). Ser-267 is subject to Phosphoserine.

The protein belongs to the MIP/aquaporin (TC 1.A.8) family. NIP (TC 1.A.8.12) subfamily.

It localises to the membrane. Functionally, potential aquaporin, which may facilitate the transport of water and small neutral solutes across cell membranes. This is Putative aquaporin NIP4-1 (NIP4-1) from Arabidopsis thaliana (Mouse-ear cress).